A 22-amino-acid chain; its full sequence is Peptide PGLa-B1 (22 aa).

At Leu-22 the chain carries Leucine amide.

Expressed by the skin glands.

The protein resides in the secreted. In terms of biological role, has antibacterial and antifungal activity. The polypeptide is Peptide PGLa-B1 (Xenopus borealis (Kenyan clawed frog)).